The following is a 259-amino-acid chain: Proteasome subunit alpha 1 (259 aa).

A disordered region spans residues 231–259; sequence LVPAEPAAASESAPEPKPDTETKPADTQD. Residues 233–243 show a composition bias toward low complexity; sequence PAEPAAASESA. Residues 244-259 are compositionally biased toward basic and acidic residues; it reads PEPKPDTETKPADTQD.

It belongs to the peptidase T1A family. In terms of assembly, the 20S proteasome core is composed of 14 alpha and 14 beta subunits that assemble into four stacked heptameric rings, resulting in a barrel-shaped structure. The two inner rings, each composed of seven catalytic beta subunits, are sandwiched by two outer rings, each composed of seven alpha subunits. All four combinations of alpha- and beta-subunits (beta2-alpha1, beta2-alpha2, beta1-alpha2 and beta1-alpha1) yield fully assembled and proteolytically active proteasomes. The catalytic chamber with the active sites is on the inside of the barrel. Has probably a gated structure, the ends of the cylinder being occluded by the N-termini of the alpha-subunits. Is likely capped by the proteasome-associated ATPase, ARC. Post-translationally, the N-terminus is blocked.

Its subcellular location is the cytoplasm. Its pathway is protein degradation; proteasomal Pup-dependent pathway. Its activity is regulated as follows. The formation of the proteasomal ATPase ARC-20S proteasome complex, likely via the docking of the C-termini of ARC into the intersubunit pockets in the alpha-rings, may trigger opening of the gate for substrate entry. Interconversion between the open-gate and close-gate conformations leads to a dynamic regulation of the 20S proteasome proteolysis activity. Functionally, component of the proteasome core, a large protease complex with broad specificity involved in protein degradation. The R.erythropolis proteasomes are able to cleave oligopeptides after Tyr, Phe and Leu, very poorly after Arg but not after Glu. Thus, displays chymotrypsin-like activity, low trypsin-like activity but no caspase-like activity. The polypeptide is Proteasome subunit alpha 1 (Rhodococcus erythropolis (Arthrobacter picolinophilus)).